Reading from the N-terminus, the 263-residue chain is 7beta-hydroxysteroid dehydrogenase (263 aa).

Residues 17-21, 40-41, and 66-67 each bind NADP(+); these read TEGVG, RR, and DF. Residue Tyr156 is the Proton acceptor of the active site. Ser240 contributes to the NADP(+) binding site.

Belongs to the short-chain dehydrogenases/reductases (SDR) family.

It catalyses the reaction a 7beta-hydroxysteroid + NADP(+) = a 7-oxosteroid + NADPH + H(+). The catalysed reaction is 7-oxolithocholate + NADPH + H(+) = ursodeoxycholate + NADP(+). Functionally, 7beta-hydroxysteroid dehydrogenase that catalyzes the reduction of the 7-oxo group of 7-oxo-lithocholate (7-oxo-LCA), to yield ursodeoxycholate (UDCA). As R.gnavus is a common core bacterium of the human gut microbiota, this enzyme contributes to the formation of UDCA in the human colon. UDCA is regarded as a chemopreventive beneficial secondary bile acid due to its low hydrophobicity; it protects hepatocytes and bile duct epithelial cells against necrosis and apoptosis induced by more hydrophobic secondary bile acids like deoxycholate (DCA). This enzyme is also able to catalyze the reverse reaction in vitro, i.e. the oxidation of the 7beta-hydroxy group of UDCA to 7-oxo-LCA, but much less efficiently than the reduction reaction. The chain is 7beta-hydroxysteroid dehydrogenase from Mediterraneibacter gnavus (strain ATCC 29149 / DSM 114966 / JCM 6515 / VPI C7-9) (Ruminococcus gnavus).